A 453-amino-acid polypeptide reads, in one-letter code: Lipase 9 (453 aa).

The first 14 residues, 1–14, serve as a signal peptide directing secretion; it reads MLYLILFLIAPIYA. A glycan (N-linked (GlcNAc...) asparagine) is linked at Asn-36. Cysteines 110 and 281 form a disulfide. Ser-194 (charge relay system) is an active-site residue. Asn-229, Asn-266, and Asn-269 each carry an N-linked (GlcNAc...) asparagine glycan. Active-site charge relay system residues include Asp-343 and His-376. Cys-359 and Cys-404 form a disulfide bridge. N-linked (GlcNAc...) asparagine glycosylation occurs at Asn-417.

Belongs to the AB hydrolase superfamily. Lipase family. Class Lip subfamily.

It localises to the secreted. The catalysed reaction is a triacylglycerol + H2O = a diacylglycerol + a fatty acid + H(+). In terms of biological role, secreted lipase that is able to hydrolyze both the neutral triacylglycerols and the monopalmitate ester Tween 40, allowing the use of hydrolyzed products as carbon sources. Has broad lipolytic activity, which may be important for colonization and subsequent infection, therefore contributing to the persistence and virulence in human tissue. The protein is Lipase 9 of Candida albicans (strain SC5314 / ATCC MYA-2876) (Yeast).